The sequence spans 33 residues: Brevinin-2E (33 aa).

Cys27 and Cys33 form a disulfide bridge.

Belongs to the frog skin active peptide (FSAP) family. Brevinin subfamily. As to expression, expressed by the skin glands.

It is found in the secreted. Functionally, shows antibacterial activity against representative Gram-negative and Gram-positive bacterial species, and hemolytic activity. The protein is Brevinin-2E of Pelophylax lessonae (Pool frog).